The following is a 66-amino-acid chain: Large ribosomal subunit protein bL35 (66 aa).

2 stretches are compositionally biased toward basic residues: residues 1–15 and 24–40; these read MPKLKTKSGAKKRFK and HAQRGKRHGMIKRTKKQ. Positions 1–40 are disordered; that stretch reads MPKLKTKSGAKKRFKVTGTGKVMHAQRGKRHGMIKRTKKQ.

The protein belongs to the bacterial ribosomal protein bL35 family.

The protein is Large ribosomal subunit protein bL35 of Bradyrhizobium sp. (strain ORS 278).